A 339-amino-acid chain; its full sequence is Zinc transporter 3 (339 aa).

An N-terminal signal peptide occupies residues 1-25 (MKTKNVKLLFFFFSVSLLLIAVVNA). The Extracellular segment spans residues 26 to 54 (AEGHSHGGPKCECSHEDDHENKAGARKYK). Residues 55-75 (IAAIPTVLIAGIIGVLFPLLG) traverse the membrane as a helical segment. Residues 76–86 (KVFPSLRPETC) lie on the Cytoplasmic side of the membrane. A helical membrane pass occupies residues 87 to 107 (FFFVTKAFAAGVILATGFMHV). The Extracellular segment spans residues 108 to 123 (LPEAYEMLNSPCLTSE). The helical transmembrane segment at 124-144 (AWEFPFTGFIAMIAAILTLSV) threads the bilayer. Topologically, residues 145-184 (DTFATSSFYKSHCKASKRVSDGETGESSVDSEKVQILRTR) are cytoplasmic. The helical transmembrane segment at 185–205 (VIAQVLELGIIVHSVVIGISL) threads the bilayer. Residues 206 to 216 (GASQSPDAAKA) are Extracellular-facing. Residues 217-237 (LFIALMFHQCFEGLGLGGCIA) traverse the membrane as a helical segment. The Cytoplasmic segment spans residues 238 to 247 (QGKFKCLSVT). The helical transmembrane segment at 248 to 268 (IMSTFFAITTPIGIVVGMGIA) threads the bilayer. Over 269 to 278 (NSYDESSPTA) the chain is Extracellular. The chain crosses the membrane as a helical span at residues 279–299 (LIVQGVLNAASAGILIYMSLV). The Cytoplasmic segment spans residues 300–315 (DLLAADFTHPKMQSNT). The chain crosses the membrane as a helical span at residues 316 to 336 (GLQIMAHIALLLGAGLMSLLA). Topologically, residues 337–339 (KWA) are extracellular.

Belongs to the ZIP transporter (TC 2.A.5) family. In terms of tissue distribution, expressed predominantly in the roots of zinc-deficient plants.

It is found in the cell membrane. Functionally, mediates zinc uptake from the rhizosphere. May also transport other divalent cations. This is Zinc transporter 3 (ZIP3) from Arabidopsis thaliana (Mouse-ear cress).